A 2672-amino-acid polypeptide reads, in one-letter code: eIF-2-alpha kinase activator GCN1 (2672 aa).

HEAT repeat units follow at residues 5 to 42 (LNWEDISPVLEKGTRESHVSKRVPFLQDISQLVRQETL), 79 to 117 (NLEPCLLENFIRFISDVVISNPATKAVADYLNLLDWINS), 174 to 211 (CIFQTTVKAFLKCLKDNDDSISFMKISIKTVLESYSKL), 227 to 267 (QAAL…NPPS), 329 to 366 (FASSKLINQYFSSFKSSKEVVRSVSLQSMIILLRKISN), 372 to 410 (EDLTKLIDEIFKNIKSNLNADYKSLISKILIEIPLTHYE), 509 to 549 (HGHA…NSSI), 611 to 648 (KYVTSVLLAITSELPDKEASIKVLINALVIAQWNIFNI), 706 to 745 (IQPNEFTPILCKTIEADLTADDFSRLSEEDFEIFAGEEGV), 902 to 932 (QDYLQEPLVELLTRVLFRIKFVSNQAAIDSI), and 933 to 970 (SLTYILPLLINVLEKGKAIALKNADKPVVKAEFVEEDE). The stretch at 975–994 (LLLAMEIISVHAEAFEDPSI) is one HEAT 12; degenerate repeat. The HEAT 13; degenerate repeat unit spans residues 995-1030 (PRISIVEVLLSLLSLPSKAKIAKDCFNALCQSISVA). HEAT repeat units follow at residues 1031–1067 (PNQEDLDMILSNLLSPNQFVRSTILETLDNEFELEPF), 1099–1138 (VVNDELLKSLFPLFNQDDSGLRLFAANAYAFGAVSLFTSE), 1185–1224 (STVAITLKIMAKAFSAEDDTVVNIIKFLVDDGGLVDREPI), 1243–1281 (QNSKDLIPIFEEALSSSTDSALKENVIILYGTLARHLQQ), 1284–1321 (ARIHTIIERLLSTLDTPSADIQQAVSACIAPLVFQFKQ), 1363–1401 (LSEFDIIRNLIEAAEDKKEPKRRESVGFCFQYLSESLGK), 1405–1442 (PYVIEILPNILKNLGDAVPEVRDATARATKAIMAHTTG), 1444–1480 (GVKKLIPVAVSNLDEIAWRTKRGSVQLLGNMAYLDPT), 1484–1521 (ASLSTIVPEIVGVLNDSHKEVRKAADESLKRFGEVIRN), 1523–1559 (EIQKLVPVLLQAIGDPTKYTEEALDSLIQTQFVHYID), 1561–1598 (PSLALIIHIIHRGMHDRSANIKRKACKIVGNMAILVDT), 1603–1640 (PYLQQLIDEVEIAMVDPVPNTRATAARALGALVERLGE), 1641–1679 (EQFPDLIPRLLDTLSDESKSGDRLGSAQALAEVISGLGL), 1681–1717 (KLDEMLPTILAGVTNFRAYIREGFMPLLLFLPVCFGS), 1721–1758 (PYINQIIQPILSGLADNDENIRDTALKAGKLIVKNYAT), 1760–1796 (AVDLLLPELERGMFDENDRIRLSSVQLTGELLFQVTG), 1825–1862 (DRRDRILAALFVCRNDTSGIVRATTVDIWKALVPNTPR), 1863–1903 (AVKE…RVGG), 1905–1942 (ALSQLLPSLEESLIETSNSDSRQGVCIALYELIESAST), 1947–1984 (QFQSTIVNIIRTALIDESATVREAAALSFDVFQDVVGK), 1985–2024 (TAVDEVLPYLLHMLESSDNSDFALLGLQEIMSKKSDVIFP), 2026–2055 (LIPTLLAPPIDAFRASALGSLAEVAGSALY), 2057–2095 (RLSIIINALVDAIIGTSEDESTKGALELALDRVFLSVND), 2097–2134 (EGLHPLLQQIMSLLKSDNIEKRIAVLERLPNFFDKTVL), 2138–2175 (VYIPNFVSHAILSLDDEDQRVVNGNFNALSTLLKKVDK), 2206–2243 (RGPNCVLPIFLHGLMYGSNDEREESALAIADVVSKTPA), 2250–2286 (VSVITGPLIRVVGERFSSDIKAAILFALNVLFIKIPM), 2290–2328 (PFIPQLQRTFVKSLSDATNETLRLRAAKALGALIEHQPR), 2347–2384 (GVKTAMLKALLEVIMKAGSKLNENSKTNIVNLVEEEML), 2392–2429 (VAYAKLIGSLSEILSNDEAHKILQDKVLNADLDGETGK), 2450–2487 (GLIDEFVSYILNAIRSPDVYFGENGTIAAGKLLLLEGE), and 2506–2546 (ENIN…FKFD). The EF3-like region stretch occupies residues 1330–1641 (LMEKLLNPTV…GALVERLGEE (312 aa)). An RWDBD region region spans residues 2207-2356 (GPNCVLPIFL…GVKTAMLKAL (150 aa)).

It belongs to the GCN1 family. As to quaternary structure, interacts (via N- and C-terminus) with GCN2 (via N-terminal RWD domain); this interaction stimulates GCN2 kinase activity in a GCN20-dependent manner in response to amino acid starvation. Interacts (via C-terminus) with GCN20 (via N-terminus); this interaction stimulates GCN2 kinase activity in response to amino acid starvation. The GCN1-GCN20 complex interacts with GCN2 on translating ribosomes in amino acid-starved cells; GCN1 may bind near the ribosomal A-site and promotes the transfer of uncharged tRNAs from the A-site to the tRNA-binding domain in GCN2 for its subsequent kinase activation, and hence allowing GCN4 translational activation and derepression of amino acid biosynthetic genes. Interacts (via C-terminus) with YIH1 (via N-terminus); this interaction reduces the GCN1-GCN20 complex formation and prevents the interaction of GCN1 with GCN2 and GCN2 kinase activation in amino acid-starved cells. Interacts with GIR2; this interaction prevents the interaction of GCN1 with GCN2 and GCN2 kinase activation in amino acid-starved cells. Interacts (via middle region) with RPS10A and RPS10B; these interactions are direct and promote GCN2 kinase activation. Associates (via N-terminus) with ribosomes; this association is stimulated in a ATP- and GCN20-dependent manner and is necessary to activate GCN2 kinase activity.

The protein localises to the cytoplasm. Its function is as follows. Ribosome collision sensor that activates a translation quality control pathway when a ribosome has stalled during translation. Directly binds to the ribosome and acts as a sentinel for colliding ribosomes. GCN1 also acts as a positive activator of the integrated stress response (ISR) by mediating activation of GCN2 in response to low amino acid, carbon, or purine availability. Component of the GCN1-GCN20 complex that forms a complex with GCN2 on translating ribosomes: during this process, GCN1 acts as a chaperone to facilitate delivery of uncharged tRNAs that enter the A-site of ribosomes to the tRNA-binding domain of GCN2, and hence stimulating GCN2 kinase activity, leading to phosphorylation of eukaryotic translation initiation factor 2 (eIF-2-alpha/SUI2). eIF-2-alpha/SUI2 phosphorylation converts eIF-2-alpha/SUI2 into a global protein synthesis inhibitor, leading to a global attenuation of cap-dependent translation, and thus to a reduced overall utilization of amino acids, while concomitantly initiating the preferential translation of ISR-specific mRNAs, such as the transcriptional activator GCN4, and hence allowing GCN4-mediated reprogramming of amino acid biosynthetic gene expression to alleviate nutrient depletion. This is eIF-2-alpha kinase activator GCN1 from Saccharomyces cerevisiae (strain ATCC 204508 / S288c) (Baker's yeast).